Reading from the N-terminus, the 345-residue chain is N-malonyltransferase FDB2 (345 aa).

The active-site Acyl-thioester intermediate is Cys-110. His-158 (proton acceptor) is an active-site residue. Asp-173 is a catalytic residue.

This sequence belongs to the arylamine N-acetyltransferase family.

Its pathway is xenobiotic degradation. Functionally, N-malonyltransferase; part of the Fusarium detoxification of benzoxazolinone cluster 2 (FDB2) involved in the degradation of benzoxazolinones produced by the host plant. Maize, wheat, and rye produce the 2 benzoxazinone phytoanticipins 2,4-dihy-droxy-7-methoxy-1,4-benzoxazin-3-one (DIMBOA) and 2,4-dihydroxy-1,4-benzoxazin-3-one (DIBOA) that, due to their inherent instability once released, spontaneously degrade to the more stable corresponding benzoxazolinones, 6-methoxy-2-benzoxazolinone (MBOA) and 2-benzoxazolinone (BOA), respectively. The first step in the detoxification of benzoxazolinones involves the hydrolysis of the cyclic ester bond of benzoxazolinones by the FDB1 cluster gamma-lactamase MBL1 to aminophenols. MBL1 is able to convert BOA into 2-aminophenol (2-AP), as well as MBOA into 5-methoxy-2-aminophenol (2-AMP). The FDB2 cluster N-malonyltransferase FDB2/NAT1 then metabolizes aminophenols via N-malonylation to non-toxic malonamic acids. FDB2/NAT1 converts 2-AP into N-(2-hydroxyphenyl) malonamic acid (HPMA) and 2-AMP into N-(2-hydroxy-4-methoxyphenyl) malonamic acid (HMPMA). The duplicated dienlactone hydrolases DLH1 and DLH2 may provide redundant function for hydrolyzing the lactone moiety in the BOA molecule. The roles of the amidases an other enzymes encoded by the 2 FDB clusters have not been identified so far. This chain is N-malonyltransferase FDB2, found in Gibberella moniliformis (strain M3125 / FGSC 7600) (Maize ear and stalk rot fungus).